The sequence spans 244 residues: Carboxy-S-adenosyl-L-methionine synthase (244 aa).

S-adenosyl-L-methionine-binding positions include tyrosine 40, 65–67 (GCS), 90–91 (DN), asparagine 134, and arginine 201.

This sequence belongs to the class I-like SAM-binding methyltransferase superfamily. Cx-SAM synthase family. Homodimer.

It catalyses the reaction prephenate + S-adenosyl-L-methionine = carboxy-S-adenosyl-L-methionine + 3-phenylpyruvate + H2O. Its function is as follows. Catalyzes the conversion of S-adenosyl-L-methionine (SAM) to carboxy-S-adenosyl-L-methionine (Cx-SAM). The sequence is that of Carboxy-S-adenosyl-L-methionine synthase from Citrifermentans bemidjiense (strain ATCC BAA-1014 / DSM 16622 / JCM 12645 / Bem) (Geobacter bemidjiensis).